The chain runs to 387 residues: Homoserine O-succinyltransferase (387 aa).

An AB hydrolase-1 domain is found at 49–358 (NAILICHALS…DAEQGHDSFL (310 aa)). The active-site Nucleophile is the serine 156. Arginine 226 contributes to the substrate binding site. Residues aspartate 321 and histidine 354 contribute to the active site. Aspartate 355 contributes to the substrate binding site.

This sequence belongs to the AB hydrolase superfamily. MetX family. In terms of assembly, homodimer.

The protein localises to the cytoplasm. It carries out the reaction L-homoserine + succinyl-CoA = O-succinyl-L-homoserine + CoA. It functions in the pathway amino-acid biosynthesis; L-methionine biosynthesis via de novo pathway; O-succinyl-L-homoserine from L-homoserine: step 1/1. Its activity is regulated as follows. Requires MetW for activity. Its function is as follows. Transfers a succinyl group from succinyl-CoA to L-homoserine, forming succinyl-L-homoserine. The polypeptide is Homoserine O-succinyltransferase (Acinetobacter baylyi (strain ATCC 33305 / BD413 / ADP1)).